Reading from the N-terminus, the 138-residue chain is Large ribosomal subunit protein uL16 (138 aa).

Residues 1–17 (MLIPRRVKHRKQHHPTR) are compositionally biased toward basic residues. Positions 1–24 (MLIPRRVKHRKQHHPTRRGAASGG) are disordered.

Belongs to the universal ribosomal protein uL16 family. Part of the 50S ribosomal subunit.

Binds 23S rRNA and is also seen to make contacts with the A and possibly P site tRNAs. The polypeptide is Large ribosomal subunit protein uL16 (Kineococcus radiotolerans (strain ATCC BAA-149 / DSM 14245 / SRS30216)).